The chain runs to 320 residues: Cytochrome f (320 aa).

Residues 1–35 (MENRNTFSWVKEQITRSISVSIMIYVITRTSISNA) form the signal peptide. Heme-binding residues include Tyr-36, Cys-56, Cys-59, and His-60. A helical transmembrane segment spans residues 286 to 305 (VQGLLFFFASVILAQVFLVL).

This sequence belongs to the cytochrome f family. As to quaternary structure, the 4 large subunits of the cytochrome b6-f complex are cytochrome b6, subunit IV (17 kDa polypeptide, petD), cytochrome f and the Rieske protein, while the 4 small subunits are PetG, PetL, PetM and PetN. The complex functions as a dimer. Heme is required as a cofactor.

Its subcellular location is the plastid. The protein resides in the chloroplast thylakoid membrane. Its function is as follows. Component of the cytochrome b6-f complex, which mediates electron transfer between photosystem II (PSII) and photosystem I (PSI), cyclic electron flow around PSI, and state transitions. The chain is Cytochrome f (petA) from Triticum aestivum (Wheat).